We begin with the raw amino-acid sequence, 513 residues long: Glycogen synthase (513 aa).

Lys47 lines the ADP-alpha-D-glucose pocket.

This sequence belongs to the glycosyltransferase 1 family. Bacterial/plant glycogen synthase subfamily.

It catalyses the reaction [(1-&gt;4)-alpha-D-glucosyl](n) + ADP-alpha-D-glucose = [(1-&gt;4)-alpha-D-glucosyl](n+1) + ADP + H(+). Its pathway is glycan biosynthesis; glycogen biosynthesis. Functionally, synthesizes alpha-1,4-glucan chains using ADP-glucose. This chain is Glycogen synthase, found in Pseudomonas paraeruginosa (strain DSM 24068 / PA7) (Pseudomonas aeruginosa (strain PA7)).